The chain runs to 140 residues: Large ribosomal subunit protein bL17 (140 aa).

It belongs to the bacterial ribosomal protein bL17 family. As to quaternary structure, part of the 50S ribosomal subunit. Contacts protein L32.

The sequence is that of Large ribosomal subunit protein bL17 from Rhizobium leguminosarum bv. trifolii (strain WSM2304).